The following is a 76-amino-acid chain: Protein MATERNALLY EXPRESSED GENE 4 (76 aa).

The N-terminal stretch at 1–27 is a signal peptide; that stretch reads MEYRKRVDALVFFSLLLLGYFAAHAHG. Cysteine 53 and cysteine 75 are oxidised to a cystine.

The protein belongs to the MEG family. In terms of tissue distribution, expressed exclusively in endosperm.

This is Protein MATERNALLY EXPRESSED GENE 4 (MEG4) from Zea mays (Maize).